Reading from the N-terminus, the 308-residue chain is Eukaryotic translation initiation factor 3 subunit G-A (308 aa).

Disordered regions lie at residues 1 to 35 (MPTG…KPDP) and 177 to 226 (TGDK…ADDN). The span at 185–194 (GAEPEPAQAP) shows a compositional bias: low complexity. Residues 209-226 (GGSRRGESMQPNRRADDN) are compositionally biased toward basic and acidic residues. In terms of domain architecture, RRM spans 227–305 (ATIRVTNLSE…LILNVEWAKP (79 aa)).

This sequence belongs to the eIF-3 subunit G family. Component of the eukaryotic translation initiation factor 3 (eIF-3) complex, which is composed of 13 subunits: eif3a, eif3b, eif3c, eif3d, eif3e, eif3f, eif3g, eif3h, eif3i, eif3j, eif3k, eif3l and eif3m.

Its subcellular location is the cytoplasm. In terms of biological role, RNA-binding component of the eukaryotic translation initiation factor 3 (eIF-3) complex, which is involved in protein synthesis of a specialized repertoire of mRNAs and, together with other initiation factors, stimulates binding of mRNA and methionyl-tRNAi to the 40S ribosome. The eIF-3 complex specifically targets and initiates translation of a subset of mRNAs involved in cell proliferation. This subunit can bind 18S rRNA. In Xenopus laevis (African clawed frog), this protein is Eukaryotic translation initiation factor 3 subunit G-A (eif3g-a).